We begin with the raw amino-acid sequence, 128 residues long: Calcitonin gene-related peptide 1 (128 aa).

The first 25 residues, M1 to A25, serve as a signal peptide directing secretion. The propeptide occupies A26–Q80. The tract at residues E63 to S83 is disordered. Positions G74–S83 are enriched in polar residues. C84 and C89 are oxidised to a cystine. Residue F119 is modified to Phenylalanine amide. Positions D125–A128 are excised as a propeptide.

It belongs to the calcitonin family.

It is found in the secreted. Its function is as follows. CGRP1/CALCA is a peptide hormone that induces vasodilation mediated by the CALCRL-RAMP1 receptor complex. Dilates a variety of vessels including the coronary, cerebral and systemic vasculature. Its abundance in the CNS also points toward a neurotransmitter or neuromodulator role. It also elevates platelet cAMP. CGRP1 can also bind and activate CALCR-RAMP1 (AMYR1) receptor complex. This Canis lupus familiaris (Dog) protein is Calcitonin gene-related peptide 1 (CALCA).